Reading from the N-terminus, the 176-residue chain is Nucleoside triphosphate/diphosphate phosphatase (176 aa).

The active-site Proton donor is the R23. Mg(2+) is bound by residues N87, D103, D105, D107, D120, and E123.

Belongs to the Ntdp family. Requires Mg(2+) as cofactor.

It catalyses the reaction a ribonucleoside 5'-triphosphate + H2O = a ribonucleoside 5'-diphosphate + phosphate + H(+). It carries out the reaction a ribonucleoside 5'-diphosphate + H2O = a ribonucleoside 5'-phosphate + phosphate + H(+). Functionally, has nucleoside phosphatase activity towards nucleoside triphosphates and nucleoside diphosphates. The polypeptide is Nucleoside triphosphate/diphosphate phosphatase (Bacillus cereus (strain AH820)).